The sequence spans 445 residues: T-box transcription factor TBX20 (445 aa).

The segment at residues 108–287 (LWDKFHELGT…SNPFAKGFRD (180 aa)) is a DNA-binding region (T-box). A disordered region spans residues 318-337 (EEDVLGEESQTTQSRGSAFT). A compositionally biased stretch (polar residues) spans 325 to 337 (ESQTTQSRGSAFT).

In terms of tissue distribution, prominently expressed in the extraembryonic mesoderm, developing heart, eye analage and motor neurons of hindbrain and spinal cord. Expressed in extraembryonic tissues such as the amnion and allantois.

It is found in the nucleus. Functionally, acts as a transcriptional activator and repressor required for cardiac development and may have key roles in the maintenance of functional and structural phenotypes in adult heart. In Mus musculus (Mouse), this protein is T-box transcription factor TBX20 (Tbx20).